The sequence spans 290 residues: Sodium/potassium-transporting ATPase subunit beta-2 (290 aa).

The Cytoplasmic portion of the chain corresponds to 1 to 39; that stretch reads MVIQKEKKSCGQVVEEWKEFVWNPRTHQFMGRTGTSWAF. A helical; Signal-anchor for type II membrane protein membrane pass occupies residues 40–67; the sequence is ILLFYLVFYGFLTAMFTLTMWVMLQTVS. The Extracellular portion of the chain corresponds to 68 to 290; sequence DHTPKYQDRL…VAFKLRINKT (223 aa). N-linked (GlcNAc...) asparagine glycosylation is found at Asn96 and Asn118. A disulfide bridge links Cys129 with Cys150. N-linked (GlcNAc...) asparagine glycosylation occurs at Asn153. The cysteines at positions 160 and 177 are disulfide-linked. Asn193, Asn197, and Asn238 each carry an N-linked (GlcNAc...) asparagine glycan. Positions 193–289 are immunoglobulin-like; sequence NQSMNVTCVG…RVAFKLRINK (97 aa). Cys200 and Cys261 are joined by a disulfide.

It belongs to the X(+)/potassium ATPases subunit beta family. As to quaternary structure, the sodium/potassium-transporting ATPase is composed of a catalytic alpha subunit, an auxiliary non-catalytic beta subunit and an additional regulatory subunit. Interacts with BSG.

The protein resides in the cell membrane. Its function is as follows. This is the non-catalytic component of the active enzyme, which catalyzes the hydrolysis of ATP coupled with the exchange of Na(+) and K(+) ions across the plasma membrane. The exact function of the beta-2 subunit is not known. In terms of biological role, mediates cell adhesion of neurons and astrocytes, and promotes neurite outgrowth. The protein is Sodium/potassium-transporting ATPase subunit beta-2 (ATP1B2) of Bos taurus (Bovine).